A 639-amino-acid chain; its full sequence is Probable potassium transport system protein Kup 1 (639 aa).

Over residues 1–16 (MALANTGSEAEPVEQS) the composition is skewed to polar residues. Positions 1–21 (MALANTGSEAEPVEQSSHPEI) are disordered. The next 12 helical transmembrane spans lie at 29–49 (LMLG…IYAF), 67–87 (ILGV…IKYI), 117–137 (AVIL…AVIT), 154–174 (PTFQ…VFAV), 182–202 (VGLV…LSGL), 220–240 (IVAF…AIFL), 260–280 (IVLA…AGQG), 302–322 (ALIP…QAVI), 354–374 (IYMP…VVGF), 383–403 (AYGI…YVVM), 411–431 (LWVA…FFAS), and 436–456 (VFEG…GMWT).

The protein belongs to the HAK/KUP transporter (TC 2.A.72) family.

It is found in the cell inner membrane. It carries out the reaction K(+)(in) + H(+)(in) = K(+)(out) + H(+)(out). Transport of potassium into the cell. Likely operates as a K(+):H(+) symporter. This Mesorhizobium japonicum (strain LMG 29417 / CECT 9101 / MAFF 303099) (Mesorhizobium loti (strain MAFF 303099)) protein is Probable potassium transport system protein Kup 1.